Consider the following 94-residue polypeptide: Co-chaperonin GroES (94 aa).

The protein belongs to the GroES chaperonin family. In terms of assembly, heptamer of 7 subunits arranged in a ring. Interacts with the chaperonin GroEL.

Its subcellular location is the cytoplasm. Together with the chaperonin GroEL, plays an essential role in assisting protein folding. The GroEL-GroES system forms a nano-cage that allows encapsulation of the non-native substrate proteins and provides a physical environment optimized to promote and accelerate protein folding. GroES binds to the apical surface of the GroEL ring, thereby capping the opening of the GroEL channel. This chain is Co-chaperonin GroES, found in Ehrlichia ruminantium (strain Gardel).